A 416-amino-acid polypeptide reads, in one-letter code: UDP-N-acetylmuramoylalanine--D-glutamate ligase (416 aa).

108 to 114 is an ATP binding site; that stretch reads GTTGKTT.

This sequence belongs to the MurCDEF family.

The protein localises to the cytoplasm. The catalysed reaction is UDP-N-acetyl-alpha-D-muramoyl-L-alanine + D-glutamate + ATP = UDP-N-acetyl-alpha-D-muramoyl-L-alanyl-D-glutamate + ADP + phosphate + H(+). Its pathway is cell wall biogenesis; peptidoglycan biosynthesis. Cell wall formation. Catalyzes the addition of glutamate to the nucleotide precursor UDP-N-acetylmuramoyl-L-alanine (UMA). The polypeptide is UDP-N-acetylmuramoylalanine--D-glutamate ligase (Chlamydia trachomatis serovar L2b (strain UCH-1/proctitis)).